The sequence spans 308 residues: Peroxisomal targeting signal 2 receptor (308 aa).

WD repeat units lie at residues 57 to 88, 101 to 132, 145 to 176, 187 to 218, 231 to 262, and 274 to 306; these read DVEDSLFGVRWSQNCENQVYACCGDGSLRLFD, EHKAEIVAIDTNTVDRRIVVTGSWDGTIKLWL, GSNSRILTVATHYSSPNLLGYTSSDGLCKFWD, EIPNQITCMNWSKSNHRMVYTADNNNLVYCYD, GHQLAVRSIKSSNSAHDLLATASYDMTSRIFD, and LHSEFVRDVDWSDFGDGSWIASVGWDESLYIWN.

Belongs to the WD repeat peroxin-7 family. Interacts with PEX21.

Its subcellular location is the cytoplasm. It is found in the cytosol. The protein resides in the peroxisome matrix. Functionally, receptor required for the peroxisomal import of proteins containing a C-terminal PTS2-type peroxisomal targeting signal, such as 3-oxoacyl-CoA thiolase. Specifically binds to cargo proteins containing a PTS2 peroxisomal targeting signal in the cytosol. Cargo protein-binding triggers interaction with PEX21 and formation of a ternary complex composed of PEX21 and PEX7 along with PTS2-containing cargo proteins, which is tranlocated into peroxisomes by passing through the PEX13-PEX14 docking complex. In Schizosaccharomyces pombe (strain 972 / ATCC 24843) (Fission yeast), this protein is Peroxisomal targeting signal 2 receptor (pex7).